The following is a 564-amino-acid chain: 3beta-hydroxysteroid-dehydrogenase/decarboxylase isoform 2 (564 aa).

16–21 (GGRGFA) is a binding site for NAD(+). N146 and N158 each carry an N-linked (GlcNAc...) asparagine glycan. Positions 161 and 165 each coordinate NAD(+). K165 acts as the Proton donor in catalysis. The 181-residue stretch at 384-564 (VADTLLWKDL…EKLFGSKKHD (181 aa)) folds into the Reticulon domain. 2 consecutive transmembrane segments (helical) span residues 398–418 (IAIF…STVV) and 424–444 (ALLV…KIFG). Residue N474 is glycosylated (N-linked (GlcNAc...) asparagine). 2 consecutive transmembrane segments (helical) span residues 486 to 506 (GNDW…SLAG) and 507 to 527 (AISL…AFLV).

It belongs to the 3-beta-HSD family.

The protein resides in the endoplasmic reticulum membrane. The catalysed reaction is a 3beta-hydroxysteroid-4alpha-carboxylate + NAD(+) = a 3-oxosteroid + CO2 + NADH. It carries out the reaction 4alpha-carboxy-4beta,14alpha-dimethyl-9beta,19-cyclo-5alpha-ergost-24(24(1))-en-3beta-ol + NAD(+) = cycloeucalenone + CO2 + NADH. It functions in the pathway steroid biosynthesis; zymosterol biosynthesis; zymosterol from lanosterol: step 4/6. Functionally, 3beta-hydroxysteroid-dehydrogenase/decarboxylase involved in sterol synthesis. Catalyzes the formation of 3-oxosteroids from 3beta-hydroxysteroids-4alpha-carboxylate. Involved in the regulation of inflorescence internodes and leaves growth, probably by affecting auxin transporter activity possibly by altering sterol composition in the membranes. This chain is 3beta-hydroxysteroid-dehydrogenase/decarboxylase isoform 2, found in Arabidopsis thaliana (Mouse-ear cress).